The sequence spans 206 residues: Outer-membrane lipoprotein LolB (206 aa).

An N-terminal signal peptide occupies residues 1 to 18 (MSLLKNLLAPCLALLLAG). Cysteine 19 carries N-palmitoyl cysteine lipidation. A lipid anchor (S-diacylglycerol cysteine) is attached at cysteine 19.

It belongs to the LolB family. Monomer.

It localises to the cell outer membrane. Its function is as follows. Plays a critical role in the incorporation of lipoproteins in the outer membrane after they are released by the LolA protein. In Stutzerimonas stutzeri (strain A1501) (Pseudomonas stutzeri), this protein is Outer-membrane lipoprotein LolB.